The primary structure comprises 201 residues: Large ribosomal subunit protein uL4 (201 aa).

The interval 44–73 (RAQKSRAEVKASRKKPWRQKGTGRARAGSV) is disordered. Residues 55-66 (SRKKPWRQKGTG) are compositionally biased toward basic residues.

Belongs to the universal ribosomal protein uL4 family. As to quaternary structure, part of the 50S ribosomal subunit.

One of the primary rRNA binding proteins, this protein initially binds near the 5'-end of the 23S rRNA. It is important during the early stages of 50S assembly. It makes multiple contacts with different domains of the 23S rRNA in the assembled 50S subunit and ribosome. Its function is as follows. Forms part of the polypeptide exit tunnel. In Hamiltonella defensa subsp. Acyrthosiphon pisum (strain 5AT), this protein is Large ribosomal subunit protein uL4.